Consider the following 384-residue polypeptide: GDSL esterase/lipase ENOD8 (384 aa).

Positions 1 to 31 (MKFMAKIELSRHIPLVTLIVLVLCITPPIFA) are cleaved as a signal peptide. The active-site Nucleophile is the serine 46. N-linked (GlcNAc...) asparagine glycosylation is found at asparagine 105, asparagine 191, asparagine 198, asparagine 276, and asparagine 330. Catalysis depends on residues aspartate 349 and histidine 352.

This sequence belongs to the 'GDSL' lipolytic enzyme family. In terms of tissue distribution, expressed in root nodules (at protein level).

Its subcellular location is the symbiosome. In terms of biological role, has lipase and esterase activities. Probably involved in root nodule physiology. The polypeptide is GDSL esterase/lipase ENOD8 (Medicago truncatula (Barrel medic)).